Reading from the N-terminus, the 295-residue chain is Septu protein PtuB (295 aa).

Its function is as follows. Component of antiviral defense system Septu type II, composed of PtuA and PtuB. Expression of Septu type II in B.subtilis (strain BEST7003) confers resistance to phages SBSphiC and SpBeta. May be a nuclease. This Bacillus mycoides (strain KBAB4) (Bacillus weihenstephanensis) protein is Septu protein PtuB.